The following is a 186-amino-acid chain: Large ribosomal subunit protein eL18 (186 aa).

It belongs to the eukaryotic ribosomal protein eL18 family. In terms of assembly, component of the large ribosomal subunit. Mature ribosomes consist of a small (40S) and a large (60S) subunit. The 40S subunit contains about 32 different proteins and 1 molecule of RNA (18S). The 60S subunit contains 45 different proteins and 3 molecules of RNA (25S, 5.8S and 5S).

It localises to the cytoplasm. Component of the ribosome, a large ribonucleoprotein complex responsible for the synthesis of proteins in the cell. The small ribosomal subunit (SSU) binds messenger RNAs (mRNAs) and translates the encoded message by selecting cognate aminoacyl-transfer RNA (tRNA) molecules. The large subunit (LSU) contains the ribosomal catalytic site termed the peptidyl transferase center (PTC), which catalyzes the formation of peptide bonds, thereby polymerizing the amino acids delivered by tRNAs into a polypeptide chain. The nascent polypeptides leave the ribosome through a tunnel in the LSU and interact with protein factors that function in enzymatic processing, targeting, and the membrane insertion of nascent chains at the exit of the ribosomal tunnel. The sequence is that of Large ribosomal subunit protein eL18 from Candida albicans (strain SC5314 / ATCC MYA-2876) (Yeast).